The primary structure comprises 288 residues: Acetyl-coenzyme A carboxylase carboxyl transferase subunit beta (288 aa).

In terms of domain architecture, CoA carboxyltransferase N-terminal spans 34–288; that stretch reads LFAKCPACKH…HLVAFHGGGQ (255 aa). Positions 38, 41, 56, and 59 each coordinate Zn(2+). A C4-type zinc finger spans residues 38 to 59; that stretch reads CPACKHMIYKKDLGLAKICPTC.

It belongs to the AccD/PCCB family. In terms of assembly, acetyl-CoA carboxylase is a heterohexamer composed of biotin carboxyl carrier protein (AccB), biotin carboxylase (AccC) and two subunits each of ACCase subunit alpha (AccA) and ACCase subunit beta (AccD). Requires Zn(2+) as cofactor.

It is found in the cytoplasm. It carries out the reaction N(6)-carboxybiotinyl-L-lysyl-[protein] + acetyl-CoA = N(6)-biotinyl-L-lysyl-[protein] + malonyl-CoA. Its pathway is lipid metabolism; malonyl-CoA biosynthesis; malonyl-CoA from acetyl-CoA: step 1/1. Its function is as follows. Component of the acetyl coenzyme A carboxylase (ACC) complex. Biotin carboxylase (BC) catalyzes the carboxylation of biotin on its carrier protein (BCCP) and then the CO(2) group is transferred by the transcarboxylase to acetyl-CoA to form malonyl-CoA. This Streptococcus dysgalactiae subsp. equisimilis (strain GGS_124) protein is Acetyl-coenzyme A carboxylase carboxyl transferase subunit beta.